A 2636-amino-acid polypeptide reads, in one-letter code: Ankyrin repeat and KH domain-containing protein CBG24701 (2636 aa).

ANK repeat units follow at residues 252 to 281 (SRIT…DPNA), 286 to 317 (NCNT…KVDV), 361 to 390 (NDNS…KNQQ), 435 to 464 (NLPS…RIDE), 468 to 500 (HKNT…DVNA), 505 to 534 (SGDT…DLTT), 536 to 564 (KITP…TIPQ), 566 to 595 (QLSR…DLNF), 598 to 627 (DERT…SVNF), 632 to 661 (NDAT…DPML), and 665 to 695 (DGVN…NMDL). Disordered regions lie at residues 994 to 1030 (PIDA…TTIE), 1172 to 1191 (KSNR…KKGK), and 1230 to 1268 (NNTQ…VIDK). Polar residues predominate over residues 1006–1030 (QQTGPKTTSLTTPQPDESNGATTIE). Low complexity predominate over residues 1233–1245 (QVQQQQGQQQQGQ). Residues 1249–1260 (THSEGDGTERAK) are compositionally biased toward basic and acidic residues. ANK repeat units lie at residues 1273–1302 (TLET…NIEH), 1306–1335 (KGFT…AIEA), 1340–1369 (TKDT…NKEH), 1373–1402 (SDYT…EINS), 1408–1437 (LGIS…DINA), 1447–1476 (YRNT…NVEH), 1480–1509 (TGLT…DPNA), 1515–1546 (TKDT…DIRN), 1548–1577 (KGCS…DTDM), and 1581–1610 (RKMS…QFPN). Residues 1638–1696 (RNAKKAQAETAEETANRLLQLIDDEKERDINKKQKIKDKKKQKKEAKKKFQAEQEQLSA) adopt a coiled-coil conformation. The interval 1669-1857 (KKQKIKDKKK…SSISERQHSW (189 aa)) is disordered. Over residues 1670–1686 (KQKIKDKKKQKKEAKKK) the composition is skewed to basic residues. Residues 1698 to 1708 (PSKPEPVVAPE) show a composition bias toward pro residues. Over residues 1709-1722 (PEPEPETEPVEEPA) the composition is skewed to acidic residues. Residues 1811-1829 (DWQKAGKEGKKVRPKREGR) are compositionally biased toward basic and acidic residues. A compositionally biased stretch (polar residues) spans 1832-1851 (APSSAGSSQAKHRSNTSSIS). The KH domain maps to 1864–1929 (VKAYEFTVPG…DVVSMAVNII (66 aa)). 7 disordered regions span residues 1980-2182 (SASI…SLPS), 2196-2221 (FKPT…STAS), 2269-2292 (NSTA…SNDF), 2301-2320 (SNQK…NSQL), 2352-2417 (SQSS…TQQQ), 2444-2465 (MHRQ…NPYY), and 2539-2636 (GMMQ…SSRM). Positions 1994–2008 (SQCNRSSKSHGNQAT) are enriched in polar residues. Residues 2025-2045 (TPPTQTQTKQQPTPSPQVQQP) show a composition bias toward low complexity. The span at 2057–2083 (SLAQSSVPQATENVTKPTQTPPASVQQ) shows a compositional bias: polar residues. 2 stretches are compositionally biased toward low complexity: residues 2099–2119 (QVVQ…QRPQ) and 2139–2148 (QQHMQQIQQQ). The span at 2167 to 2179 (PGPPVQPQTPPQS) shows a compositional bias: pro residues. The span at 2269–2280 (NSTASSLNTATT) shows a compositional bias: low complexity. Polar residues predominate over residues 2281-2292 (KNDTSDWGSNDF). Composition is skewed to low complexity over residues 2361–2373 (QHQQ…MQDP) and 2391–2417 (PQQF…TQQQ). Composition is skewed to polar residues over residues 2449–2465 (NSSS…NPYY), 2565–2574 (RSASGSSQNR), and 2583–2595 (QQPQ…TQAD). Residues 2599–2615 (RLLLQQQQQQRSSQQQQ) are compositionally biased toward low complexity. Over residues 2616 to 2636 (NPTNQGLPQKWSNTWNSSSRM) the composition is skewed to polar residues.

Belongs to the mask family.

The protein localises to the cytoplasm. In Caenorhabditis briggsae, this protein is Ankyrin repeat and KH domain-containing protein CBG24701.